We begin with the raw amino-acid sequence, 390 residues long: Protein dimmed (390 aa).

Positions 24–163 (HNNNNYNTDG…RNMRRLESNE (140 aa)) are disordered. Composition is skewed to polar residues over residues 29–44 (YNTD…SAEG) and 55–64 (RTSQLSNNTY). N61 is a glycosylation site (N-linked (GlcNAc...) asparagine). The segment covering 69–78 (TDSSSQSDDT) has biased composition (low complexity). Residues 79–90 (SGGGGSSNGGGS) show a composition bias toward gly residues. Low complexity predominate over residues 122-141 (PSTIAPNSTSSNSSNANGNA). N-linked (GlcNAc...) asparagine glycosylation is found at N128, N133, and N140. Positions 151 to 163 (AKERNMRRLESNE) are enriched in basic and acidic residues. In terms of domain architecture, bHLH spans 156 to 208 (MRRLESNERERMRMHSLNDAFQSLREVIPHVEMERRLSKIETLTLAKNYIINL). Residues N207 and N237 are each glycosylated (N-linked (GlcNAc...) asparagine). Positions 312–339 (QQQQASHLPHHQQAMHGHGHLGASIQSQ) are disordered. N347 carries N-linked (GlcNAc...) asparagine glycosylation.

Forms homodimers via the bHLH domain. These dimers bind the core E-box sequence. As to expression, detected in the developing nervous system in the bilateral domains in the cephalic region that later on forms part of the ring gland. Concomitantly expressed in the larval central nervous system (CNS), including the dorsal chain neurons as well as several bilateral clusters of neurons: large, midline protocerebral brain cells (MC), lateral protocerebral brain cells (LC), ventral subesophageal neurons (SE) and lateral abdominal neurons, and the transverse nerves. Outside the CNS, detected in at least three classes of endocrine cells: intrinsic cells of the corpora cardiaca, midgut cells, the Inka cells, lateral Bipolar neurons associated with the segmental transverse nerve, and several peptidergic cells of the enteric nervous system. Expressed only in central and peripheral neuroendocrine secretory cells and neurosecretory neurons but not in sensory or motor neurons.

Its subcellular location is the cytoplasm. In terms of biological role, transcription factor that regulates neurosecretory (NS) cell function and neuroendocrine cell fate. Acts as a master regulator of common NS functions such as Phm expression and neuropeptide production. Plays a role as a regulator of peptide-containing large dense-core vesicle (LDCV) production and peptidergic cell differentiation. Controls transcription of FMRFamide in Tv neuronal cells and Fur1 in Ap-let cells (Tvb and dorsal apterous cells). Also required for up-regulation of Phm in Tv and Ap-let cells, and expression of three neuropeptide genes, Ms, FMRFamide and Lk. Influences both regulated and constitutive secretory activity in neuroendocrine cells at embryonic and postembryonic level. Loss of function studies show reduced cellular levels of various neuropeptides and neuropeptide biosynthetic enzymes. The protein is Protein dimmed (dimm) of Drosophila melanogaster (Fruit fly).